The sequence spans 383 residues: ATP phosphoribosyltransferase regulatory subunit (383 aa).

Belongs to the class-II aminoacyl-tRNA synthetase family. HisZ subfamily. As to quaternary structure, heteromultimer composed of HisG and HisZ subunits.

Its subcellular location is the cytoplasm. It participates in amino-acid biosynthesis; L-histidine biosynthesis; L-histidine from 5-phospho-alpha-D-ribose 1-diphosphate: step 1/9. Functionally, required for the first step of histidine biosynthesis. May allow the feedback regulation of ATP phosphoribosyltransferase activity by histidine. In Paraburkholderia phytofirmans (strain DSM 17436 / LMG 22146 / PsJN) (Burkholderia phytofirmans), this protein is ATP phosphoribosyltransferase regulatory subunit.